A 488-amino-acid polypeptide reads, in one-letter code: Histone deacetylase 2 (488 aa).

The interval 9–322 (KKKVCYYYDG…WTYETAVALD (314 aa)) is histone deacetylase. Gly-28 and Lys-32 together coordinate 1D-myo-inositol 1,4,5,6-tetrakisphosphate. N6-acetyllysine; alternate is present on Lys-75. Lys-75 participates in a covalent cross-link: Glycyl lysine isopeptide (Lys-Gly) (interchain with G-Cter in SUMO2); alternate. The active site involves His-142. Ca(2+) contacts are provided by Asp-175, Asp-177, His-179, Phe-188, Thr-191, Val-194, Ser-198, and Phe-199. Zn(2+) contacts are provided by Asp-177 and His-179. Lys-221 carries the post-translational modification N6-acetyllysine. A Ca(2+)-binding site is contributed by Tyr-223. Cys-262 bears the S-nitrosocysteine mark. Residue Asp-265 participates in Zn(2+) binding. A 1D-myo-inositol 1,4,5,6-tetrakisphosphate-binding site is contributed by Arg-271. S-nitrosocysteine is present on Cys-274. The interval 389-488 (AVHEDSGDED…GAKSEQLSNP (100 aa)) is disordered. 4 positions are modified to phosphoserine: Ser-394, Ser-407, Ser-422, and Ser-424. A compositionally biased stretch (basic and acidic residues) spans 402-417 (PDKRISIRASDKRIAC). The span at 418–428 (DEEFSDSEDEG) shows a compositional bias: acidic residues. Over residues 429-481 (EGGRRNVADHKKGAKKARIEEDKKETEDKKTDVKEEDKSKDNSGEKTDPKGAK) the composition is skewed to basic and acidic residues. Residues Lys-439, Lys-452, Lys-458, Lys-462, Lys-478, and Lys-481 each participate in a glycyl lysine isopeptide (Lys-Gly) (interchain with G-Cter in SUMO2) cross-link.

It belongs to the histone deacetylase family. HD type 1 subfamily. In terms of assembly, part of the core histone deacetylase (HDAC) complex composed of HDAC1, HDAC2, RBBP4 and RBBP7, the core complex associates with SIN3, SAP18 and SAP30 to form the SIN3 HDAC complex. Component of the nucleosome remodeling and deacetylase (NuRD) repressor complex, composed of core proteins MTA1, MTA2, MTA3, RBBP4, RBBP7, HDAC1, HDAC2, MBD2, MBD3, and peripherally associated proteins CDK2AP1, CDK2AP2, GATAD2A, GATAD2B, CHD3, CHD4 and CHD5. The exact stoichiometry of the NuRD complex is unknown, and some subunits such as MBD2 and MBD3, GATAD2A and GATAD2B, and CHD3, CHD4 and CHD5 define mutually exclusive NuRD complexes. Component of a RCOR/GFI/KDM1A/HDAC complex. Component of a BHC histone deacetylase complex that contains HDAC1, HDAC2, HMG20B, KDM1A, RCOR1 and PHF21A. The BHC complex may also contain ZMYM2, ZNF217, ZMYM3, GSE1 and GTF2I. Part of a complex containing the core histones H2A, H2B, H3 and H4, DEK and unphosphorylated DAXX. Part of a complex containing ATR and CHD4. Forms a heterologous complex at least with YY1. Interacts in the late S-phase of DNA-replication with DNMT1 in the other transcriptional repressor complex composed of DNMT1, DMAP1, PCNA, CAF1. Component of a mSin3A corepressor complex that contains SIN3A, SAP130, SUDS3, ARID4B, HDAC1 and HDAC2. Part of a complex composed of TRIM28, HDAC1, HDAC2 and EHMT2. Part of a complex containing at least CDYL, MIER1, MIER2, HDAC1 and HDAC2. Component of a histone deacetylase complex containing DNTTIP1, ZNF541, HDAC1 and HDAC2. Forms a complex comprising APPL1, RUVBL2, APPL2, CTNNB1 and HDAC1. Interacts directly with GFI1. Interacts directly with GFI1B. Interacts with APEX1; the interaction is not dependent on the acetylated status of APEX1. Interacts with ATR. Interacts with BCL6 (non-acetylated form). Interacts with BEND3. Interacts with CBFA2T3. Interacts with CDK2AP1. Interacts with CHD4. Interacts with CHD5. Interacts with CHFR. Interacts with CRY1. Interacts with DNMT1. Interacts with GATAD2A. Interacts with HCFC1. Interacts with HDAC7. Interacts with HDAC10. Interacts with INSM1. Interacts with KDM4A. Interacts with MACROH2A1 (via the non-histone region). Interacts with MBD3L2. Interacts with MTA1, with a preference for sumoylated MTA1. Interacts with NACC2. Interacts with NRIP1. Interacts with PELP1. Interacts with PIMREG. Interacts with PRDM6. Interacts with PWWP2B Interacts with SAP30. Interacts with SAP30L. Interacts with SETDB1. Interacts with SIX3. Interacts with SMARCAD1. Interacts with SNW1. Interacts with SPHK2. Interacts with SPEN/MINT. Interacts (CK2 phosphorylated form) with SP3. Interacts with SUV39H1. Interacts with TSHZ3 (via its N-terminus). Interacts with ZMYND8. Interacts with ZNF431. Interacts with ZNF263; recruited to the SIX3 promoter along with other proteins involved in chromatin modification and transcriptional corepression where it contributes to transcriptional repression. Identified in a complex with HDAC1, KCTD19, DNTTIP1 and ZNF541. Component of the SIN3B complex, which includes SIN3B, HDAC2, PHF12 and MORF4L1; interacts directly with all subunits. Zn(2+) serves as cofactor. Ca(2+) is required as a cofactor. Post-translationally, S-nitrosylated by GAPDH. In neurons, S-nitrosylation at Cys-262 and Cys-274 does not affect enzyme activity, but induces HDAC2 release from chromatin. This in turn increases acetylation of histones surrounding neurotrophin-dependent gene promoters and promotes their transcription. In embryonic cortical neurons, S-Nitrosylation regulates dendritic growth and branching.

Its subcellular location is the nucleus. It localises to the cytoplasm. It catalyses the reaction N(6)-acetyl-L-lysyl-[histone] + H2O = L-lysyl-[histone] + acetate. It carries out the reaction N(6)-acetyl-L-lysyl-[protein] + H2O = L-lysyl-[protein] + acetate. The enzyme catalyses N(6)-(2E)-butenoyl-L-lysyl-[protein] + H2O = (2E)-2-butenoate + L-lysyl-[protein]. The catalysed reaction is N(6)-(2-hydroxyisobutanoyl)-L-lysyl-[protein] + H2O = 2-hydroxy-2-methylpropanoate + L-lysyl-[protein]. It catalyses the reaction N(6)-[(S)-lactoyl]-L-lysyl-[protein] + H2O = (S)-lactate + L-lysyl-[protein]. Inositol tetraphosphate (1D-myo-inositol 1,4,5,6-tetrakisphosphate) may act as an intermolecular glue between HDAC2 and N-Cor repressor complex components. Its function is as follows. Histone deacetylase that catalyzes the deacetylation of lysine residues on the N-terminal part of the core histones (H2A, H2B, H3 and H4). Histone deacetylation gives a tag for epigenetic repression and plays an important role in transcriptional regulation, cell cycle progression and developmental events. Histone deacetylases act via the formation of large multiprotein complexes. Forms transcriptional repressor complexes by associating with MAD, SIN3, YY1 and N-COR. Component of a RCOR/GFI/KDM1A/HDAC complex that suppresses, via histone deacetylase (HDAC) recruitment, a number of genes implicated in multilineage blood cell development. Acts as a component of the histone deacetylase NuRD complex which participates in the remodeling of chromatin. Component of the SIN3B complex that represses transcription and counteracts the histone acetyltransferase activity of EP300 through the recognition H3K27ac marks by PHF12 and the activity of the histone deacetylase HDAC2. Also deacetylates non-histone targets: deacetylates TSHZ3, thereby regulating its transcriptional repressor activity. May be involved in the transcriptional repression of circadian target genes, such as PER1, mediated by CRY1 through histone deacetylation. Involved in MTA1-mediated transcriptional corepression of TFF1 and CDKN1A. In addition to protein deacetylase activity, also acts as a protein-lysine deacylase by recognizing other acyl groups: catalyzes removal of (2E)-butenoyl (crotonyl), lactoyl (lactyl) and 2-hydroxyisobutanoyl (2-hydroxyisobutyryl) acyl groups from lysine residues, leading to protein decrotonylation, delactylation and de-2-hydroxyisobutyrylation, respectively. This Mus musculus (Mouse) protein is Histone deacetylase 2.